Consider the following 138-residue polypeptide: Transcription antitermination protein NusB (138 aa).

It belongs to the NusB family.

Functionally, involved in transcription antitermination. Required for transcription of ribosomal RNA (rRNA) genes. Binds specifically to the boxA antiterminator sequence of the ribosomal RNA (rrn) operons. This chain is Transcription antitermination protein NusB, found in Leptospira interrogans serogroup Icterohaemorrhagiae serovar copenhageni (strain Fiocruz L1-130).